The following is a 202-amino-acid chain: Type II restriction enzyme MthZI (202 aa).

It carries out the reaction Endonucleolytic cleavage of DNA to give specific double-stranded fragments with terminal 5'-phosphates.. Its function is as follows. A P subtype restriction enzyme that recognizes the double-stranded sequence 5'-CTAG-3' and cleaves after C-1. The chain is Type II restriction enzyme MthZI from Methanothermobacter thermautotrophicus (Methanobacterium thermoformicicum).